Here is a 275-residue protein sequence, read N- to C-terminus: Dermonecrotic toxin SpeSicTox-betaIIA2ii (275 aa).

His5 is an active-site residue. Residues Glu25 and Asp27 each coordinate Mg(2+). The Nucleophile role is filled by His41. Disulfide bonds link Cys45/Cys51 and Cys47/Cys190. Asp85 is a Mg(2+) binding site.

It belongs to the arthropod phospholipase D family. Class II subfamily. Requires Mg(2+) as cofactor. As to expression, expressed by the venom gland.

The protein localises to the secreted. It carries out the reaction an N-(acyl)-sphingosylphosphocholine = an N-(acyl)-sphingosyl-1,3-cyclic phosphate + choline. The enzyme catalyses an N-(acyl)-sphingosylphosphoethanolamine = an N-(acyl)-sphingosyl-1,3-cyclic phosphate + ethanolamine. The catalysed reaction is a 1-acyl-sn-glycero-3-phosphocholine = a 1-acyl-sn-glycero-2,3-cyclic phosphate + choline. It catalyses the reaction a 1-acyl-sn-glycero-3-phosphoethanolamine = a 1-acyl-sn-glycero-2,3-cyclic phosphate + ethanolamine. Dermonecrotic toxins cleave the phosphodiester linkage between the phosphate and headgroup of certain phospholipids (sphingolipid and lysolipid substrates), forming an alcohol (often choline) and a cyclic phosphate. This toxin acts on sphingomyelin (SM). It may also act on ceramide phosphoethanolamine (CPE), lysophosphatidylcholine (LPC) and lysophosphatidylethanolamine (LPE), but not on lysophosphatidylserine (LPS), and lysophosphatidylglycerol (LPG). It acts by transphosphatidylation, releasing exclusively cyclic phosphate products as second products. Induces dermonecrosis, hemolysis, increased vascular permeability, edema, inflammatory response, and platelet aggregation. In Sicarius peruensis (Six-eyed sand spider), this protein is Dermonecrotic toxin SpeSicTox-betaIIA2ii.